We begin with the raw amino-acid sequence, 331 residues long: UBX domain-containing protein 2B (331 aa).

Disordered stretches follow at residues 1 to 26 (MAEG…SARD) and 38 to 63 (EMKC…PPLR). Alanine 2 bears the N-acetylalanine mark. Residues 38-48 (EMKCKSSKPDR) are compositionally biased toward basic and acidic residues. The residue at position 56 (serine 56) is a Phosphoserine. Phosphothreonine is present on threonine 59. The residue at position 66 (serine 66) is a Phosphoserine. An SEP domain is found at 141–206 (DVQILLRLWS…MEDHQDQEYI (66 aa)). Phosphoserine is present on residues serine 231, serine 234, and serine 235. The 78-residue stretch at 252–329 (DSVPTTKIQI…DILNTVILQQ (78 aa)) folds into the UBX domain.

Belongs to the NSFL1C family. In terms of assembly, interacts with VCP. Does not bind ubiquitin. As to expression, present at high level in brain. Also present in liver, kidney, spleen, testis, lung and heart (at protein level).

It is found in the nucleus. It localises to the cytoplasm. The protein resides in the cytosol. Its subcellular location is the endoplasmic reticulum. The protein localises to the golgi apparatus. It is found in the cytoskeleton. It localises to the microtubule organizing center. The protein resides in the centrosome. Its function is as follows. Adapter protein required for Golgi and endoplasmic reticulum biogenesis. Involved in Golgi and endoplasmic reticulum maintenance during interphase and in their reassembly at the end of mitosis. The complex formed with VCP has membrane fusion activity; membrane fusion activity requires USO1-GOLGA2 tethering and BET1L. VCPIP1 is also required, but not its deubiquitinating activity. Together with NSFL1C/p47, regulates the centrosomal levels of kinase AURKA/Aurora A during mitotic progression by promoting AURKA removal from centrosomes in prophase. Also, regulates spindle orientation during mitosis. This chain is UBX domain-containing protein 2B (Ubxn2b), found in Rattus norvegicus (Rat).